The chain runs to 630 residues: Elongation factor 4 (630 aa).

The segment at Met-1–Ala-22 is disordered. The tr-type G domain maps to Ala-30–Val-211. GTP-binding positions include Asp-42–Thr-47 and Asn-158–Asp-161.

Belongs to the TRAFAC class translation factor GTPase superfamily. Classic translation factor GTPase family. LepA subfamily.

The protein localises to the cell membrane. The enzyme catalyses GTP + H2O = GDP + phosphate + H(+). Functionally, required for accurate and efficient protein synthesis under certain stress conditions. May act as a fidelity factor of the translation reaction, by catalyzing a one-codon backward translocation of tRNAs on improperly translocated ribosomes. Back-translocation proceeds from a post-translocation (POST) complex to a pre-translocation (PRE) complex, thus giving elongation factor G a second chance to translocate the tRNAs correctly. Binds to ribosomes in a GTP-dependent manner. This chain is Elongation factor 4, found in Rhodococcus jostii (strain RHA1).